Consider the following 115-residue polypeptide: NAD(P)H-quinone oxidoreductase subunit M (115 aa).

This sequence belongs to the complex I NdhM subunit family. As to quaternary structure, NDH-1 can be composed of about 15 different subunits; different subcomplexes with different compositions have been identified which probably have different functions.

Its subcellular location is the cellular thylakoid membrane. It catalyses the reaction a plastoquinone + NADH + (n+1) H(+)(in) = a plastoquinol + NAD(+) + n H(+)(out). The catalysed reaction is a plastoquinone + NADPH + (n+1) H(+)(in) = a plastoquinol + NADP(+) + n H(+)(out). Functionally, NDH-1 shuttles electrons from an unknown electron donor, via FMN and iron-sulfur (Fe-S) centers, to quinones in the respiratory and/or the photosynthetic chain. The immediate electron acceptor for the enzyme in this species is believed to be plastoquinone. Couples the redox reaction to proton translocation, and thus conserves the redox energy in a proton gradient. Cyanobacterial NDH-1 also plays a role in inorganic carbon-concentration. This chain is NAD(P)H-quinone oxidoreductase subunit M, found in Prochlorococcus marinus (strain MIT 9301).